The sequence spans 113 residues: Probable mesentericin-Y105 immunity protein (113 aa).

It belongs to the immunity protein EntA family.

Imparts immunity to mesentericin-Y105 to naturally sensitive host strains. This is Probable mesentericin-Y105 immunity protein (mesI) from Leuconostoc mesenteroides.